The chain runs to 346 residues: Putative D-threonate 4-phosphate dehydrogenase (346 aa).

H141 and T142 together coordinate substrate. 3 residues coordinate a divalent metal cation: H171, H215, and H270. Residues K278 and R296 each coordinate substrate.

The protein belongs to the PdxA family. PdxA2 subfamily. As to quaternary structure, homodimer. A divalent metal cation serves as cofactor.

It catalyses the reaction 4-O-phospho-D-threonate + NAD(+) = dihydroxyacetone phosphate + CO2 + NADH. Its function is as follows. Catalyzes the NAD-dependent oxidation and subsequent decarboxylation of D-threonate 4-phosphate to produce dihydroxyacetone phosphate (DHAP). The chain is Putative D-threonate 4-phosphate dehydrogenase from Cutibacterium acnes (strain DSM 16379 / KPA171202) (Propionibacterium acnes).